A 1006-amino-acid polypeptide reads, in one-letter code: Unconventional myosin-Id (1006 aa).

Ala2 carries the N-acetylalanine modification. The 687-residue stretch at 9–695 folds into the Myosin motor domain; sequence FGKADFVLMD…TLFTLEELRA (687 aa). ATP is bound at residue 102–109; that stretch reads GESGAGKT. Ser200 is subject to Phosphoserine. Phosphotyrosine is present on Tyr536. Residues 572–594 form an actin-binding region; it reads MIALVDNLASKEPYYVRCIKPND. IQ domains are found at residues 699–719 and 721–741; these read IRIV…MRYK and TKAA…SYIQ. Residues 812–1005 enclose the TH1 domain; it reads GQRADLGLQR…RSGFILSVPG (194 aa).

This sequence belongs to the TRAFAC class myosin-kinesin ATPase superfamily. Myosin family. In terms of assembly, interacts (via the two IQ motifs) with calmodulin. Binds an additional calmodulin chain via a third, C-terminal region. Interacts with F-actin.

It localises to the cytoplasm. Its subcellular location is the perikaryon. The protein resides in the cell projection. It is found in the dendrite. The protein localises to the early endosome. It localises to the cell cortex. Unconventional myosin that functions as actin-based motor protein with ATPase activity. Plays a role in endosomal protein trafficking, and especially in the transfer of cargo proteins from early to recycling endosomes. Required for normal planar cell polarity in ciliated tracheal cells, for normal rotational polarity of cilia, and for coordinated, unidirectional ciliary movement in the trachea. Required for normal, polarized cilia organization in brain ependymal epithelial cells. This chain is Unconventional myosin-Id (MYO1D), found in Canis lupus familiaris (Dog).